We begin with the raw amino-acid sequence, 404 residues long: Argininosuccinate synthase (404 aa).

ATP contacts are provided by residues 12 to 20 (AYSGGLDTS) and Ala-40. 2 residues coordinate L-citrulline: Tyr-92 and Ser-97. Gly-122 serves as a coordination point for ATP. Residues Thr-124, Asn-128, and Asp-129 each contribute to the L-aspartate site. Asn-128 contacts L-citrulline. Arg-132, Ser-181, Ser-190, Glu-266, and Tyr-278 together coordinate L-citrulline.

The protein belongs to the argininosuccinate synthase family. Type 1 subfamily. Homotetramer.

The protein resides in the cytoplasm. The catalysed reaction is L-citrulline + L-aspartate + ATP = 2-(N(omega)-L-arginino)succinate + AMP + diphosphate + H(+). It functions in the pathway amino-acid biosynthesis; L-arginine biosynthesis; L-arginine from L-ornithine and carbamoyl phosphate: step 2/3. The protein is Argininosuccinate synthase of Erwinia tasmaniensis (strain DSM 17950 / CFBP 7177 / CIP 109463 / NCPPB 4357 / Et1/99).